The sequence spans 330 residues: Ribosomal RNA small subunit methyltransferase C (330 aa).

This sequence belongs to the methyltransferase superfamily. RsmC family. Monomer.

It is found in the cytoplasm. The catalysed reaction is guanosine(1207) in 16S rRNA + S-adenosyl-L-methionine = N(2)-methylguanosine(1207) in 16S rRNA + S-adenosyl-L-homocysteine + H(+). Its function is as follows. Specifically methylates the guanine in position 1207 of 16S rRNA in the 30S particle. This Haemophilus influenzae (strain PittEE) protein is Ribosomal RNA small subunit methyltransferase C.